Consider the following 235-residue polypeptide: 7-cyano-7-deazaguanine synthase (235 aa).

16–26 is an ATP binding site; it reads FSGGQDSTTCL. Residues C195, C204, C207, and C210 each coordinate Zn(2+).

It belongs to the QueC family. Zn(2+) is required as a cofactor.

It catalyses the reaction 7-carboxy-7-deazaguanine + NH4(+) + ATP = 7-cyano-7-deazaguanine + ADP + phosphate + H2O + H(+). It participates in purine metabolism; 7-cyano-7-deazaguanine biosynthesis. In terms of biological role, catalyzes the ATP-dependent conversion of 7-carboxy-7-deazaguanine (CDG) to 7-cyano-7-deazaguanine (preQ(0)). The protein is 7-cyano-7-deazaguanine synthase of Shewanella frigidimarina (strain NCIMB 400).